The chain runs to 85 residues: Elongation factor 1-beta (85 aa).

It belongs to the EF-1-beta/EF-1-delta family.

Functionally, promotes the exchange of GDP for GTP in EF-1-alpha/GDP, thus allowing the regeneration of EF-1-alpha/GTP that could then be used to form the ternary complex EF-1-alpha/GTP/AAtRNA. The sequence is that of Elongation factor 1-beta from Methanosphaerula palustris (strain ATCC BAA-1556 / DSM 19958 / E1-9c).